Reading from the N-terminus, the 238-residue chain is 1-(5-phosphoribosyl)-5-[(5-phosphoribosylamino)methylideneamino] imidazole-4-carboxamide isomerase (238 aa).

The active-site Proton acceptor is the Asp-8. The active-site Proton donor is Asp-129.

Belongs to the HisA/HisF family.

Its subcellular location is the cytoplasm. It carries out the reaction 1-(5-phospho-beta-D-ribosyl)-5-[(5-phospho-beta-D-ribosylamino)methylideneamino]imidazole-4-carboxamide = 5-[(5-phospho-1-deoxy-D-ribulos-1-ylimino)methylamino]-1-(5-phospho-beta-D-ribosyl)imidazole-4-carboxamide. Its pathway is amino-acid biosynthesis; L-histidine biosynthesis; L-histidine from 5-phospho-alpha-D-ribose 1-diphosphate: step 4/9. In Lacticaseibacillus paracasei (strain ATCC 334 / BCRC 17002 / CCUG 31169 / CIP 107868 / KCTC 3260 / NRRL B-441) (Lactobacillus paracasei), this protein is 1-(5-phosphoribosyl)-5-[(5-phosphoribosylamino)methylideneamino] imidazole-4-carboxamide isomerase.